Consider the following 288-residue polypeptide: MTDYTPQQIVARGARADAEAAADAIDNHPGLEGATYSILEEDEDKGLWRIDAFPTTDEEDAGLLEVLAGYPLKVVRETLADADWLAMALSGLPPVRAGRFFVYGMHDRGRLPASTVNLRIEAGAAFGTGHHGTTVGCLMAYDKLIKARKFKKVLDVGAGTGLLAIAAARTGSRIAVGTDIDRPSVRISKENAKVNRANAKFVHASGLGHRLVTDNAPYDLVFANILARPLISLAQDIKTALVPGGTVILSGLLRTQERMVKAAYVSRGFKVVNRIHRDAWAALVLQRP.

4 residues coordinate S-adenosyl-L-methionine: Thr-134, Gly-157, Asp-179, and Asn-224.

The protein belongs to the methyltransferase superfamily. PrmA family.

The protein localises to the cytoplasm. The catalysed reaction is L-lysyl-[protein] + 3 S-adenosyl-L-methionine = N(6),N(6),N(6)-trimethyl-L-lysyl-[protein] + 3 S-adenosyl-L-homocysteine + 3 H(+). Methylates ribosomal protein L11. The polypeptide is Ribosomal protein L11 methyltransferase (Caulobacter sp. (strain K31)).